The sequence spans 259 residues: Imidazole glycerol phosphate synthase subunit HisF (259 aa).

Active-site residues include Asp11 and Asp130.

The protein belongs to the HisA/HisF family. As to quaternary structure, heterodimer of HisH and HisF.

It localises to the cytoplasm. It catalyses the reaction 5-[(5-phospho-1-deoxy-D-ribulos-1-ylimino)methylamino]-1-(5-phospho-beta-D-ribosyl)imidazole-4-carboxamide + L-glutamine = D-erythro-1-(imidazol-4-yl)glycerol 3-phosphate + 5-amino-1-(5-phospho-beta-D-ribosyl)imidazole-4-carboxamide + L-glutamate + H(+). The protein operates within amino-acid biosynthesis; L-histidine biosynthesis; L-histidine from 5-phospho-alpha-D-ribose 1-diphosphate: step 5/9. Its function is as follows. IGPS catalyzes the conversion of PRFAR and glutamine to IGP, AICAR and glutamate. The HisF subunit catalyzes the cyclization activity that produces IGP and AICAR from PRFAR using the ammonia provided by the HisH subunit. The protein is Imidazole glycerol phosphate synthase subunit HisF of Desulfosudis oleivorans (strain DSM 6200 / JCM 39069 / Hxd3) (Desulfococcus oleovorans).